Consider the following 279-residue polypeptide: Dermonecrotic toxin StSicTox-betaIB1i (279 aa).

His12 is a catalytic residue. Mg(2+) is bound by residues Glu32 and Asp34. Residue His48 is the Nucleophile of the active site. 2 cysteine pairs are disulfide-bonded: Cys52-Cys58 and Cys54-Cys198. Residue Asp92 coordinates Mg(2+).

This sequence belongs to the arthropod phospholipase D family. Class II subfamily. Class IIb sub-subfamily. The cofactor is Mg(2+). In terms of tissue distribution, expressed by the venom gland.

The protein resides in the secreted. The catalysed reaction is an N-(acyl)-sphingosylphosphocholine = an N-(acyl)-sphingosyl-1,3-cyclic phosphate + choline. It catalyses the reaction N-hexanoyl-sphing-4-enine-1-phosphocholine = N-(hexanoyl)-sphing-4-enine-1,3-cyclic phosphate + choline. The enzyme catalyses an N-(acyl)-sphingosylphosphoethanolamine = an N-(acyl)-sphingosyl-1,3-cyclic phosphate + ethanolamine. It carries out the reaction N-dodecanoyl-heptadecasphing-4-enine-1-phosphoethanolamine = N-dodecanoyl-heptadecasphing-4-enine-1,3-cyclic phosphate + ethanolamine. The catalysed reaction is a 1-acyl-sn-glycero-3-phosphoethanolamine = a 1-acyl-sn-glycero-2,3-cyclic phosphate + ethanolamine. It catalyses the reaction 1-tetradecanoyl-sn-glycero-3-phosphoethanolamine = 1-tetradecanoyl-sn-glycero-2,3-cyclic phosphate + ethanolamine. In terms of biological role, dermonecrotic toxins cleave the phosphodiester linkage between the phosphate and headgroup of certain phospholipids (sphingolipid and lysolipid substrates), forming an alcohol (often choline) and a cyclic phosphate. This toxin acts on lysophosphatidylethanolamine (LPE) and ceramide phosphoethanolamine (CPE) with high activity. This toxin acts on sphingomyelin (SM) with very low activity and is not active on lysophosphatidylserine (LPS), lysophosphatidylcholine (LPC) and lysophosphatidylglycerol (LPG). It acts by transphosphatidylation, releasing exclusively cyclic phosphate as second products. It is not surprising that spider toxins have affinity for ethanolamine-containing sphingolipids since they are common in insect prey. Induces dermonecrosis, hemolysis, increased vascular permeability, edema, inflammatory response, and platelet aggregation. The chain is Dermonecrotic toxin StSicTox-betaIB1i from Sicarius terrosus (Cave spider).